The sequence spans 396 residues: Elongation factor Tu (396 aa).

The region spanning 10-206 is the tr-type G domain; sequence KPHVNIGTIG…AVDAYIPEPE (197 aa). Positions 19-26 are G1; it reads GHVDHGKT. GTP is bound at residue 19 to 26; sequence GHVDHGKT. Thr-26 provides a ligand contact to Mg(2+). Residues 60–64 are G2; the sequence is GITIS. Residues 81 to 84 form a G3 region; the sequence is DCPG. GTP-binding positions include 81–85 and 136–139; these read DCPGH and NKVD. The tract at residues 136–139 is G4; the sequence is NKVD. A G5 region spans residues 174–176; that stretch reads SAL.

The protein belongs to the TRAFAC class translation factor GTPase superfamily. Classic translation factor GTPase family. EF-Tu/EF-1A subfamily. Monomer.

It localises to the cytoplasm. The catalysed reaction is GTP + H2O = GDP + phosphate + H(+). GTP hydrolase that promotes the GTP-dependent binding of aminoacyl-tRNA to the A-site of ribosomes during protein biosynthesis. The chain is Elongation factor Tu from Magnetococcus marinus (strain ATCC BAA-1437 / JCM 17883 / MC-1).